The chain runs to 397 residues: Enoyl-[acyl-carrier-protein] reductase [NADH] (397 aa).

NAD(+) contacts are provided by residues 48–53 (GASTGY), 74–75 (FE), 111–112 (DA), and 139–140 (VA). Tyr225 serves as a coordination point for substrate. Tyr235 (proton donor) is an active-site residue. Residues Lys244 and 273 to 275 (VVT) each bind NAD(+).

The protein belongs to the TER reductase family. Monomer.

The catalysed reaction is a 2,3-saturated acyl-[ACP] + NAD(+) = a (2E)-enoyl-[ACP] + NADH + H(+). The protein operates within lipid metabolism; fatty acid biosynthesis. In terms of biological role, involved in the final reduction of the elongation cycle of fatty acid synthesis (FAS II). Catalyzes the reduction of a carbon-carbon double bond in an enoyl moiety that is covalently linked to an acyl carrier protein (ACP). The sequence is that of Enoyl-[acyl-carrier-protein] reductase [NADH] from Burkholderia pseudomallei (strain K96243).